The primary structure comprises 713 residues: F-box/WD repeat-containing protein 7 (713 aa).

The interval 1–150 (MNQELLSVGS…DEHTHNSNVT (150 aa)) is disordered. Residue serine 26 is modified to Phosphoserine. Positions 46–55 (RHQEEEHTAR) are enriched in basic and acidic residues. Positions 69–84 (QNDSQQGQVEENNNRF) are enriched in polar residues. Residues 87–135 (VDEDSSGNQEEQEEDEEHAGEQEEEEEEEEEEEEEEEMDQESDDFDQSD) show a composition bias toward acidic residues. Residues 94 to 136 (NQEEQEEDEEHAGEQEEEEEEEEEEEEEEEMDQESDDFDQSDD) are a coiled coil. Residues 136 to 145 (DSSREDEHTH) show a composition bias toward basic and acidic residues. Threonine 211 carries the phosphothreonine modification. Phosphoserine is present on serine 233. Residues 284–330 (RDFISLLPKELALYVLSFLEPKDLLQAAQTCRYWRILAEDNLLWREK) enclose the F-box domain. WD repeat units lie at residues 384 to 424 (GHDD…RTLV), 426 to 462 (HTGGVWSSQMRDNIIISGSTDRTLKVWNAETGECIHT), 465 to 504 (GHTSTVRCMHLHEKRVVSGSRDATLRVWDIETGQCLHVLM), 506 to 542 (HVAAVRCVQYDGRRVVSGAYDFMVKVWDPETETCLHT), 545 to 584 (GHTNRVYSLQFDGIHVVSGSLDTSIRVWDVETGNCIHTLT), 586 to 624 (HQSLTSGMELKDNILVSGNADSTVKIWDIKTGQCLQTLQ), and 628 to 665 (KHQSAVTCLQFNKNFVITSSDDGTVKLWDLKTGEFIRN).

Homodimer; homodimerization plays a role in substrate binding and/or ubiquitination and degradation. Component of the SCF(FBXW7) complex consisting of CUL1, RBX1, SKP1 and FBXW7. Interacts (via F-box domain) with SKP1. Interacts (via F-box domain) with pseudophosphatase STYX; the interaction is direct and prevents FBXW7 interaction with SKP1. Interacts with cyclin-E (CCNE1 or CCNE2). Interacts with PSEN1. Forms a trimeric complex with NOTCH1 and SGK1. Interacts with NOTCH1 intracellular domain/NICD and NOTCH4 intracellular domain/NICD. Interacts with NOTCH2 intracellular domain (N2ICD). Interacts with MYC (when phosphorylated). Interacts with USP28, counteracting ubiquitination of MYC. Interacts (when phosphorylated at Thr-211) with PIN1, disrupting FBXW7 dimerization and promoting FBXW7 autoubiquitination and degradation. Interacts with UBE2QL1. Interacts with FAM83D; promotes FBXW7 degradation. Interacts with MYCN; FBXW7 competes with AURKA for binding to unphosphorylated MYCN but not for binding to phosphorylated MYCN. Interacts with JUN. Found in a complex with JUN and PRR7. Interacts with JUN and PRR7; the interaction inhibits ubiquitination-mediated JUN degradation, promoting its phosphorylation and transcriptional activity. Interacts with NFE2L1. Interacts with NR1D1. Interacts with RICTOR; mediates RICTOR ubiquitination and degradation. Post-translationally, phosphorylation at Thr-211 promotes interaction with PIN1, leading to disrupt FBXW7 dimerization and promoting FBXW7 autoubiquitination and degradation. Phosphorylated by ATM at Ser-26 in response to DNA damage, promoting recruitment to DNA damage sites and 'Lys-63'-linked ubiquitination of phosphorylated XRCC4. In terms of processing, ubiquitinated: autoubiquitinates following phosphorylation at Thr-211 and subsequent interaction with PIN1. Ubiquitination leads to its degradation.

It localises to the nucleus. It is found in the nucleoplasm. The protein localises to the chromosome. Its pathway is protein modification; protein ubiquitination. In terms of biological role, substrate recognition component of a SCF (SKP1-CUL1-F-box protein) E3 ubiquitin-protein ligase complex which mediates the ubiquitination and subsequent proteasomal degradation of target proteins. Recognizes and binds phosphorylated sites/phosphodegrons within target proteins and thereafter brings them to the SCF complex for ubiquitination. Identified substrates include cyclin-E (CCNE1 or CCNE2), JUN, MYC, NOTCH1 released notch intracellular domain (NICD), NOTCH2, MCL1, MLST8, RICTOR and probably PSEN1. Acts as a negative regulator of JNK signaling by binding to phosphorylated JUN and promoting its ubiquitination and subsequent degradation. SCF(FBXW7) complex mediates the ubiquitination and subsequent degradation of NFE2L1. Involved in bone homeostasis and negative regulation of osteoclast differentiation. Regulates the amplitude of the cyclic expression of hepatic core clock genes and genes involved in lipid and glucose metabolism via ubiquitination and proteasomal degradation of their transcriptional repressor NR1D1; CDK1-dependent phosphorylation of NR1D1 is necessary for SCF(FBXW7)-mediated ubiquitination. Also able to promote 'Lys-63'-linked ubiquitination in response to DNA damage. The SCF(FBXW7) complex facilitates double-strand break repair following phosphorylation by ATM: phosphorylation promotes localization to sites of double-strand breaks and 'Lys-63'-linked ubiquitination of phosphorylated XRCC4, enhancing DNA non-homologous end joining. This is F-box/WD repeat-containing protein 7 from Rattus norvegicus (Rat).